Consider the following 240-residue polypeptide: Thyroid transcription factor 1-associated protein 26 (240 aa).

Positions 104–181 are disordered; that stretch reads LRKQQRKAGL…QEEYERVQAK (78 aa). The segment covering 131–149 has biased composition (low complexity); the sequence is TEQTSSEEPPGGHQPQPEE. Positions 171–181 are enriched in basic and acidic residues; that stretch reads AQEEYERVQAK.

Belongs to the TAP26 family. As to quaternary structure, interacts with NKX2-1.

The protein resides in the nucleus. Its function is as follows. Component of the transcription complexes of the pulmonary surfactant-associated protein-B (SFTPB) and -C (SFTPC). Enhances homeobox protein Nkx-2.1-activated SFTPB and SFTPC promoter activities. The sequence is that of Thyroid transcription factor 1-associated protein 26 (Ccdc59) from Mus musculus (Mouse).